A 100-amino-acid polypeptide reads, in one-letter code: Elevenin-Vc1 (100 aa).

The first 24 residues, 1 to 24, serve as a signal peptide directing secretion; that stretch reads MAPSQKALLVLVLSMLLTASDSWA. Cys29 and Cys38 are joined by a disulfide. The propeptide occupies 44–100; sequence KRGGDSLSVGGSAELDDALTDPFLRSEEPREWRELTRLSRVLQTFLSHPTGETEQHD.

Belongs to the elevenin family. As to quaternary structure, monomer. In terms of tissue distribution, expressed by the venom duct.

Its subcellular location is the secreted. Functionally, may mimic the function of prey elevenin neuropeptide. In vivo, intracranial injection in mice induces hyperactivity (tested at 5 and 10 nM). In Conus victoriae (Queen Victoria cone), this protein is Elevenin-Vc1.